The following is a 698-amino-acid chain: ATP-dependent RNA helicase DHX33 (698 aa).

Disordered regions lie at residues 1-20 (MPEE…SCPP) and 29-50 (TAGG…AQPS). Positions 1 to 71 (MPEEASLPPA…RRSLPIFRAR (71 aa)) are required for nucleolar location. Residues 30 to 40 (AGGGGGAGGGR) show a composition bias toward gly residues. Residues 75–243 (LAQLRNLDNA…FNRAPVLYLE (169 aa)) form the Helicase ATP-binding domain. 88–95 (GETGSGKT) lines the ATP pocket. The short motif at 185 to 188 (DEAH) is the DEAH box element. One can recognise a Helicase C-terminal domain in the interval 271–441 (QIHQEAPASQ…SVILQLLAMK (171 aa)). An HA2; required for interaction with EIF3G and RPL26 region spans residues 462-553 (AIAQLDLLGA…ISSEGDHITL (92 aa)). The Critical for rDNA-binding signature appears at 536-550 (VQSVRKKFISSEGDH).

This sequence belongs to the DEAD box helicase family. DEAH subfamily. As to quaternary structure, interacts with UBTF. Interacts with DDX3X, EIF3G and EIF3H; the interaction is independent of RNA. Interacts (via HA2 region and Helicase C-terminal domain) with the components of the large ribosomal subunit RPL3, RPL7, RPL26 and RPL27. Binds to mRNA. Interacts (via the helicase C-terminal domain) with MAVS. Binds to double-stranded RNA (via the helicase C-terminal domain). In terms of processing, ubiquitinated, leading to its degradation by the proteasome. Deubiquitinated by USP36.

The protein localises to the nucleus. It is found in the nucleolus. The protein resides in the nucleoplasm. It localises to the cytoplasm. Its subcellular location is the inflammasome. The catalysed reaction is ATP + H2O = ADP + phosphate + H(+). Functionally, implicated in nucleolar organization, ribosome biogenesis, protein synthesis and cytoplasmic dsRNA sensing. Stimulates RNA polymerase I transcription of the 47S precursor rRNA. Associates with ribosomal DNA (rDNA) loci where it is involved in POLR1A recruitment. In the cytoplasm, promotes elongation-competent 80S ribosome assembly at the late stage of mRNA translation initiation. Senses cytosolic dsRNA mediating NLRP3 inflammasome formation in macrophages and type I interferon production in myeloid dendritic cells. Required for NLRP3 activation induced by viral dsRNA and bacterial RNA. In dendritic cells, required for induction of type I interferon production induced by cytoplasmic dsRNA via the activation of MAPK and NF-kappa-B signaling pathways. The protein is ATP-dependent RNA helicase DHX33 of Mus musculus (Mouse).